We begin with the raw amino-acid sequence, 1254 residues long: Zinc finger protein BRUTUS (1254 aa).

The disordered stretch occupies residues 1 to 40 (MATPLPDFETARGGGAVASSSTTVLPSSVSSSSSSSRPLP). The segment covering 19-40 (SSSTTVLPSSVSSSSSSSRPLP) has biased composition (low complexity). Residues 201 to 221 (FLCSIPVNMLAVFLPWISSSI) traverse the membrane as a helical segment. The segment at 893–913 (GSPDSSSTETSKPSPQKDNDH) is disordered. Residues 895–906 (PDSSSTETSKPS) show a composition bias toward polar residues. The CHY-type zinc-finger motif lies at 999 to 1068 (PEKQIYGCEH…PICTTPSCDG (70 aa)). Zn(2+) is bound by residues Cys-1006, His-1008, Cys-1019, Cys-1020, Cys-1026, Cys-1029, His-1030, His-1036, Cys-1048, Cys-1051, Cys-1061, Cys-1066, Cys-1076, Cys-1079, His-1090, Cys-1091, Cys-1094, Cys-1097, His-1109, Cys-1110, Cys-1113, Cys-1116, His-1124, and Cys-1126. The segment at 1071-1134 (MAKHYCSICK…KCLEKSLETN (64 aa)) adopts a CTCHY-type zinc-finger fold. The RING-type; atypical zinc finger occupies 1135 to 1176 (CPICCEFLFTSSEAVRALPCGHYMHSACFQAYTCSHYTCPIC).

In terms of assembly, interacts with the PYEL proteins bHLH115, bHLH104 and ILR3 in the nucleus. Binds zinc and iron ions. In terms of tissue distribution, expressed in cotyledons of seedlings, young leaves, developing and mature embryos, and other reproductive tissues including floral vasculature, funiculus, septum, and gynoecium valves.

The protein resides in the membrane. It localises to the nucleus. Its pathway is protein modification; protein ubiquitination. In terms of biological role, essential protein. Negatively regulates the response to iron deficiency and thus contributes to iron homeostasis. Exhibits E3 ubiquitin-protein ligase activity in vitro. Plays a role in root growth, rhizosphere acidification, and iron reductase activity in response to iron deprivation. Facilitates 26S proteasome-mediated degradation of PYEL proteins in the absence of iron. The chain is Zinc finger protein BRUTUS from Arabidopsis thaliana (Mouse-ear cress).